Consider the following 434-residue polypeptide: Nicotinate phosphoribosyltransferase (434 aa).

H242 is modified (phosphohistidine; by autocatalysis).

It belongs to the NAPRTase family. In terms of processing, transiently phosphorylated on a His residue during the reaction cycle. Phosphorylation strongly increases the affinity for substrates and increases the rate of nicotinate D-ribonucleotide production. Dephosphorylation regenerates the low-affinity form of the enzyme, leading to product release.

It catalyses the reaction nicotinate + 5-phospho-alpha-D-ribose 1-diphosphate + ATP + H2O = nicotinate beta-D-ribonucleotide + ADP + phosphate + diphosphate. It functions in the pathway cofactor biosynthesis; NAD(+) biosynthesis; nicotinate D-ribonucleotide from nicotinate: step 1/1. In terms of biological role, catalyzes the synthesis of beta-nicotinate D-ribonucleotide from nicotinate and 5-phospho-D-ribose 1-phosphate at the expense of ATP. This Bartonella tribocorum (strain CIP 105476 / IBS 506) protein is Nicotinate phosphoribosyltransferase.